A 354-amino-acid chain; its full sequence is Coiled-coil domain-containing protein 86 (354 aa).

Residues 1 to 354 (MDTPLRRSRR…QPPQRPATKV (354 aa)) form a disordered region. Residues Ser18 and Ser24 each carry the phosphoserine modification. Positions 31–44 (VLVEFESNPKETGE) are enriched in basic and acidic residues. Phosphoserine occurs at positions 47 and 53. A compositionally biased stretch (low complexity) spans 49-58 (PGLGSPSRQP). Phosphothreonine is present on Thr60. Residues Ser61, Ser64, Ser75, Ser86, Ser105, Ser108, Ser123, and Ser183 each carry the phosphoserine modification. Positions 97-107 (FPQNQPESSPE) are enriched in polar residues. Over residues 199–211 (PAREGPAPKKREG) the composition is skewed to basic and acidic residues. A phosphoserine mark is found at Ser212 and Ser213. The span at 232-248 (GKPKSGRVWKDRSKKRF) shows a compositional bias: basic residues. 2 stretches are compositionally biased toward basic and acidic residues: residues 267-289 (DRQE…ERRR) and 297-311 (AENL…RKAE). Positions 274 to 317 (AKDFARHLEEEKERRRQEKKKRRAENLRRRLENERKAEIVQVIR) form a coiled coil. The segment covering 320–330 (AKLKRAKKKQL) has biased composition (basic residues). Arg336 bears the Citrulline mark.

Citrullinated by PADI4.

Its subcellular location is the nucleus. The protein resides in the chromosome. The protein localises to the nucleolus. In terms of biological role, required for proper chromosome segregation during mitosis and error-free mitotic progression. The chain is Coiled-coil domain-containing protein 86 from Bos taurus (Bovine).